The sequence spans 583 residues: Mitogen-activated protein kinase 4 (583 aa).

A Protein kinase domain is found at Phe20–Met312. Residues Leu26 to Val34 and Lys49 each bind ATP. Asp149 serves as the catalytic Proton acceptor. Phosphoserine; by PAK1, PAK2 and PAK3 is present on Ser186. The SEG motif motif lies at Ser186–Gly188. The FRIEDE motif motif lies at Phe328–Glu333. Basic and acidic residues-rich tracts occupy residues Asp366 to Arg379 and Val391 to Ser410. The interval Asp366–Ser410 is disordered. Residue Ser430 is modified to Phosphoserine. Residues Ser495–Pro531 form a disordered region.

The protein belongs to the protein kinase superfamily. CMGC Ser/Thr protein kinase family. MAP kinase subfamily. Homodimer. Heterodimer with ERK3/MAPK6. Interacts with (via FRIEDE motif) MAPKAPK5. The cofactor is Mg(2+). In terms of processing, phosphorylated at Ser-186 by PAK1, PAK2 and PAK3 resulting in catalytic activation. Phosphorylated by MAPKAPK5 at other sites.

Its subcellular location is the cytoplasm. The protein resides in the nucleus. It catalyses the reaction L-seryl-[protein] + ATP = O-phospho-L-seryl-[protein] + ADP + H(+). It carries out the reaction L-threonyl-[protein] + ATP = O-phospho-L-threonyl-[protein] + ADP + H(+). Its activity is regulated as follows. Activated by phosphorylation at Ser-186. Its function is as follows. Atypical MAPK protein. Phosphorylates microtubule-associated protein 2 (MAP2) and MAPKAPK5. The precise role of the complex formed with MAPKAPK5 is still unclear, but the complex follows a complex set of phosphorylation events: upon interaction with atypical MAPKAPK5, ERK4/MAPK4 is phosphorylated at Ser-186 and then mediates phosphorylation and activation of MAPKAPK5, which in turn phosphorylates ERK4/MAPK4. May promote entry in the cell cycle. In Mus musculus (Mouse), this protein is Mitogen-activated protein kinase 4 (Mapk4).